The sequence spans 318 residues: 2-keto-3-deoxygluconate permease (318 aa).

Helical transmembrane passes span 10–30 (LPGG…TLWP), 42–62 (GLIS…GATI), 82–102 (IAVA…GGIP), 109–129 (LSVL…YAAL), 139–159 (AGAV…LILG), 163–183 (LATF…LGFA), 201–221 (TLVP…TIVH), 224–244 (ASGV…LLLA), 257–277 (VAAS…AGMA), and 288–308 (TALV…LTAL).

The protein belongs to the KdgT transporter family.

The protein localises to the cell inner membrane. It catalyses the reaction 2-dehydro-3-deoxy-D-gluconate(in) + H(+)(in) = 2-dehydro-3-deoxy-D-gluconate(out) + H(+)(out). Its function is as follows. Catalyzes the proton-dependent uptake of 2-keto-3-deoxygluconate (KDG) into the cell. This is 2-keto-3-deoxygluconate permease from Xanthomonas oryzae pv. oryzae (strain MAFF 311018).